The sequence spans 122 residues: Small ribosomal subunit protein uS13 (122 aa).

The segment at 95 to 122 (GLPVRGQRTRTNARTRKGPRKTVAKKKK) is disordered.

This sequence belongs to the universal ribosomal protein uS13 family. Part of the 30S ribosomal subunit. Forms a loose heterodimer with protein S19. Forms two bridges to the 50S subunit in the 70S ribosome.

Its function is as follows. Located at the top of the head of the 30S subunit, it contacts several helices of the 16S rRNA. In the 70S ribosome it contacts the 23S rRNA (bridge B1a) and protein L5 of the 50S subunit (bridge B1b), connecting the 2 subunits; these bridges are implicated in subunit movement. Contacts the tRNAs in the A and P-sites. The sequence is that of Small ribosomal subunit protein uS13 from Thermoanaerobacter pseudethanolicus (strain ATCC 33223 / 39E) (Clostridium thermohydrosulfuricum).